Reading from the N-terminus, the 336-residue chain is Glycerol-3-phosphate dehydrogenase [NAD(P)+] (336 aa).

NADPH is bound by residues Ser-16, Tyr-17, His-37, and Lys-111. 3 residues coordinate sn-glycerol 3-phosphate: Lys-111, Gly-140, and Thr-142. Ala-144 contacts NADPH. Lys-196, Asp-249, Ser-259, Arg-260, and Asn-261 together coordinate sn-glycerol 3-phosphate. The Proton acceptor role is filled by Lys-196. Residue Arg-260 coordinates NADPH. 2 residues coordinate NADPH: Val-284 and Glu-286.

The protein belongs to the NAD-dependent glycerol-3-phosphate dehydrogenase family.

The protein resides in the cytoplasm. It carries out the reaction sn-glycerol 3-phosphate + NAD(+) = dihydroxyacetone phosphate + NADH + H(+). The enzyme catalyses sn-glycerol 3-phosphate + NADP(+) = dihydroxyacetone phosphate + NADPH + H(+). It functions in the pathway membrane lipid metabolism; glycerophospholipid metabolism. Functionally, catalyzes the reduction of the glycolytic intermediate dihydroxyacetone phosphate (DHAP) to sn-glycerol 3-phosphate (G3P), the key precursor for phospholipid synthesis. The protein is Glycerol-3-phosphate dehydrogenase [NAD(P)+] of Haemophilus ducreyi (strain 35000HP / ATCC 700724).